The chain runs to 992 residues: Probable RNA-dependent RNA polymerase 3 (992 aa).

The interval 88-113 is disordered; it reads PRLSPGESPVQSPRTPAKKSCRASQD.

This sequence belongs to the RdRP family.

It carries out the reaction RNA(n) + a ribonucleoside 5'-triphosphate = RNA(n+1) + diphosphate. Its function is as follows. Probably involved in the RNA silencing pathway and required for the generation of small interfering RNAs (siRNAs). The polypeptide is Probable RNA-dependent RNA polymerase 3 (RDR3) (Arabidopsis thaliana (Mouse-ear cress)).